The sequence spans 239 residues: MAKRARKSKKNVSRARLLAQAMRRWLLRGMFGLGALMLVWIVAYAVVPVPTTIYMQQERARLGGIERDWVPMDQIAPVLARSVVAAEDANFCLHWGFDMTAIRDAIADGAARGGSTISQQTVKNAFLWHGRSWVRKALEAAITPVMELVWPKRRVLEVYLNVAEFAPGVFGAEAGAQHHFGVSAADLTARQASLMAAVLPNPQRRDAGSPSDLVNRRARSIADGAALIRADGRADCFAN.

The helical transmembrane segment at 29 to 49 threads the bilayer; it reads GMFGLGALMLVWIVAYAVVPV.

Belongs to the glycosyltransferase 51 family.

The protein localises to the cell inner membrane. It carries out the reaction [GlcNAc-(1-&gt;4)-Mur2Ac(oyl-L-Ala-gamma-D-Glu-L-Lys-D-Ala-D-Ala)](n)-di-trans,octa-cis-undecaprenyl diphosphate + beta-D-GlcNAc-(1-&gt;4)-Mur2Ac(oyl-L-Ala-gamma-D-Glu-L-Lys-D-Ala-D-Ala)-di-trans,octa-cis-undecaprenyl diphosphate = [GlcNAc-(1-&gt;4)-Mur2Ac(oyl-L-Ala-gamma-D-Glu-L-Lys-D-Ala-D-Ala)](n+1)-di-trans,octa-cis-undecaprenyl diphosphate + di-trans,octa-cis-undecaprenyl diphosphate + H(+). It functions in the pathway cell wall biogenesis; peptidoglycan biosynthesis. Its function is as follows. Peptidoglycan polymerase that catalyzes glycan chain elongation from lipid-linked precursors. The polypeptide is Biosynthetic peptidoglycan transglycosylase (Jannaschia sp. (strain CCS1)).